Consider the following 193-residue polypeptide: dCTP deaminase (193 aa).

DCTP-binding positions include 110–115 (RSSLAR), Asp-128, 136–138 (VLE), Tyr-171, Lys-178, and Gln-182. The Proton donor/acceptor role is filled by Glu-138. Residues 170-193 (PYNSRQDAKYRGQQGAVASRIDKD) form a disordered region.

This sequence belongs to the dCTP deaminase family. In terms of assembly, homotrimer.

It catalyses the reaction dCTP + H2O + H(+) = dUTP + NH4(+). It functions in the pathway pyrimidine metabolism; dUMP biosynthesis; dUMP from dCTP (dUTP route): step 1/2. Functionally, catalyzes the deamination of dCTP to dUTP. This is dCTP deaminase from Yersinia enterocolitica serotype O:8 / biotype 1B (strain NCTC 13174 / 8081).